The primary structure comprises 288 residues: 4-diphosphocytidyl-2-C-methyl-D-erythritol kinase (288 aa).

Lys-8 is a catalytic residue. Residue 90 to 100 participates in ATP binding; that stretch reads PVGAGLAGGSS. Asp-132 is an active-site residue.

Belongs to the GHMP kinase family. IspE subfamily.

The enzyme catalyses 4-CDP-2-C-methyl-D-erythritol + ATP = 4-CDP-2-C-methyl-D-erythritol 2-phosphate + ADP + H(+). It participates in isoprenoid biosynthesis; isopentenyl diphosphate biosynthesis via DXP pathway; isopentenyl diphosphate from 1-deoxy-D-xylulose 5-phosphate: step 3/6. In terms of biological role, catalyzes the phosphorylation of the position 2 hydroxy group of 4-diphosphocytidyl-2C-methyl-D-erythritol. This chain is 4-diphosphocytidyl-2-C-methyl-D-erythritol kinase, found in Chlamydia trachomatis serovar D (strain ATCC VR-885 / DSM 19411 / UW-3/Cx).